The following is a 407-amino-acid chain: Na(+)-translocating NADH-quinone reductase subunit F (407 aa).

The helical transmembrane segment at 3 to 23 (IILGVVMFTLIVLALTVMILF) threads the bilayer. The 2Fe-2S ferredoxin-type domain maps to 32 to 126 (GDITVEINED…NLKIELPEEI (95 aa)). 4 residues coordinate [2Fe-2S] cluster: Cys69, Cys75, Cys78, and Cys110. Residues 129 to 269 (VKKWTCEVIS…SGPFGEFFAK (141 aa)) enclose the FAD-binding FR-type domain.

Belongs to the NqrF family. Composed of six subunits; NqrA, NqrB, NqrC, NqrD, NqrE and NqrF. It depends on [2Fe-2S] cluster as a cofactor. The cofactor is FAD.

Its subcellular location is the cell inner membrane. The catalysed reaction is a ubiquinone + n Na(+)(in) + NADH + H(+) = a ubiquinol + n Na(+)(out) + NAD(+). Its function is as follows. NQR complex catalyzes the reduction of ubiquinone-1 to ubiquinol by two successive reactions, coupled with the transport of Na(+) ions from the cytoplasm to the periplasm. The first step is catalyzed by NqrF, which accepts electrons from NADH and reduces ubiquinone-1 to ubisemiquinone by a one-electron transfer pathway. In Yersinia pseudotuberculosis serotype I (strain IP32953), this protein is Na(+)-translocating NADH-quinone reductase subunit F.